The primary structure comprises 273 residues: Putative pyruvate, phosphate dikinase regulatory protein (273 aa).

153–160 lines the ADP pocket; it reads GISRTSKT.

It belongs to the pyruvate, phosphate/water dikinase regulatory protein family. PDRP subfamily.

The enzyme catalyses N(tele)-phospho-L-histidyl/L-threonyl-[pyruvate, phosphate dikinase] + ADP = N(tele)-phospho-L-histidyl/O-phospho-L-threonyl-[pyruvate, phosphate dikinase] + AMP + H(+). The catalysed reaction is N(tele)-phospho-L-histidyl/O-phospho-L-threonyl-[pyruvate, phosphate dikinase] + phosphate + H(+) = N(tele)-phospho-L-histidyl/L-threonyl-[pyruvate, phosphate dikinase] + diphosphate. In terms of biological role, bifunctional serine/threonine kinase and phosphorylase involved in the regulation of the pyruvate, phosphate dikinase (PPDK) by catalyzing its phosphorylation/dephosphorylation. The protein is Putative pyruvate, phosphate dikinase regulatory protein of Rhizobium etli (strain ATCC 51251 / DSM 11541 / JCM 21823 / NBRC 15573 / CFN 42).